The primary structure comprises 91 residues: Small ribosomal subunit protein uS17 (91 aa).

The protein belongs to the universal ribosomal protein uS17 family. As to quaternary structure, part of the 30S ribosomal subunit.

In terms of biological role, one of the primary rRNA binding proteins, it binds specifically to the 5'-end of 16S ribosomal RNA. The polypeptide is Small ribosomal subunit protein uS17 (Thermobifida fusca (strain YX)).